The chain runs to 64 residues: Putative antitoxin AF_1074 (64 aa).

It belongs to the UPF0165 family.

Possibly the antitoxin component of a type II toxin-antitoxin (TA) system. The protein is Putative antitoxin AF_1074 of Archaeoglobus fulgidus (strain ATCC 49558 / DSM 4304 / JCM 9628 / NBRC 100126 / VC-16).